Here is a 63-residue protein sequence, read N- to C-terminus: Conotoxin TxMRCL-D012 (63 aa).

Residues 1–19 (MRCLPVFVILLLLIASTPS) form the signal peptide. A propeptide spanning residues 20-47 (DTVPLKTKDDMPQASFHGNARRTLQMLS) is cleaved from the precursor. Gln50 carries the pyrrolidone carboxylic acid modification.

This sequence belongs to the conotoxin T superfamily. In terms of processing, contains 2 disulfide bonds that can be either 'C1-C3, C2-C4' or 'C1-C4, C2-C3', since these disulfide connectivities have been observed for conotoxins with cysteine framework V (for examples, see AC P0DQQ7 and AC P81755). Expressed by the venom duct.

The protein resides in the secreted. In Conus textile (Cloth-of-gold cone), this protein is Conotoxin TxMRCL-D012.